A 345-amino-acid polypeptide reads, in one-letter code: Nuclear distribution protein nudE-like 1 (345 aa).

The stretch at 28-190 (QSFQEARDEL…LAVRERQQEV (163 aa)) forms a coiled coil. The self-association stretch occupies residues 56–166 (VQAEQRNRDL…LDEKESLLVS (111 aa)). An interaction with KATNB1 region spans residues 64 to 189 (DLQADNQRLK…ELAVRERQQE (126 aa)). A required for interaction with PAFAH1B1 region spans residues 114 to 133 (YVRELEQANDDLERAKRATI). The tract at residues 175-345 (RDLRQELAVR…SAPGMLPLSV (171 aa)) is interaction with CENPF. The interval 189–256 (EVTRKSAPSS…SARISALNIV (68 aa)) is interaction with YWHAE. An interaction with NEFL region spans residues 191–345 (TRKSAPSSPT…SAPGMLPLSV (155 aa)). The interaction with KATNA1 stretch occupies residues 195–256 (APSSPTLDCE…SARISALNIV (62 aa)). Phosphoserine is present on S215. Phosphothreonine; by CDK1 and MAPK1 is present on T219. S231 carries the phosphoserine modification. The interval 241–280 (TSPLTPSARISALNIVGDLLRKVGALESKLAACRNFAKDQ) is interaction with DISC1. At S242 the chain carries Phosphoserine; by CDK1. The residue at position 245 (T245) is a Phosphothreonine; by CDK1 and MAPK1. A required for localization to the centrosome and interaction with dynein, dynactin, tubulin gamma, PCM1 and PCNT region spans residues 256–291 (VGDLLRKVGALESKLAACRNFAKDQASRKSYISGNV). C273 carries the S-palmitoyl cysteine; by ZDHHC2, ZDHHC3 and ZDHHC7 lipid modification. The interval 315–345 (GAVNGFDPAPPPPGLGSSRPSSAPGMLPLSV) is disordered. The span at 329-339 (LGSSRPSSAPG) shows a compositional bias: low complexity. Position 344 is a phosphoserine (S344).

This sequence belongs to the nudE family. As to quaternary structure, self-associates. Interacts with DISC1, dynein, dynactin, tubulin gamma, KATNA1, KATNB1, microtubules, PAFAH1B1, PCM1, PCNT, and YWHAE. Interacts directly with NEFL and indirectly with NEFH. Interacts (via C-terminus) with CENPF. Interacts with ZNF365. Interacts with PLEKHM1 (via N- and C-terminus). Interacts with GTP-bound RAB9A; the interaction may lead to RAB9A-dynein motor tethering. In terms of processing, phosphorylated in mitosis. Can be phosphorylated by CDK1, CDK5 and MAPK1. Phosphorylation by CDK5 promotes interaction with KATNA1 and YWHAE. Palmitoylation at Cys-273 reduces affinity for dynein.

Its subcellular location is the cytoplasm. It localises to the cytoskeleton. It is found in the microtubule organizing center. The protein resides in the centrosome. The protein localises to the chromosome. Its subcellular location is the centromere. It localises to the kinetochore. It is found in the spindle. Required for organization of the cellular microtubule array and microtubule anchoring at the centrosome. May regulate microtubule organization at least in part by targeting the microtubule severing protein KATNA1 to the centrosome. Also positively regulates the activity of the minus-end directed microtubule motor protein dynein. May enhance dynein-mediated microtubule sliding by targeting dynein to the microtubule plus ends. Required for several dynein- and microtubule-dependent processes such as the maintenance of Golgi integrity, the centripetal motion of secretory vesicles and the coupling of the nucleus and centrosome. Also required during brain development for the migration of newly formed neurons from the ventricular/subventricular zone toward the cortical plate. Plays a role, together with DISC1, in the regulation of neurite outgrowth. Required for mitosis in some cell types but appears to be dispensible for mitosis in cortical neuronal progenitors, which instead requires NDE1. Facilitates the polymerization of neurofilaments from the individual subunits NEFH and NEFL. Positively regulates lysosome peripheral distribution and ruffled border formation in osteoclasts. Plays a role, together with DISC1, in the regulation of neurite outgrowth. May act as a RAB9A/B effector that tethers RAB9-associated late endosomes to the dynein motor for their retrograde transport to the trans-Golgi network. The sequence is that of Nuclear distribution protein nudE-like 1 (NDEL1) from Pongo abelii (Sumatran orangutan).